Consider the following 339-residue polypeptide: D-erythrose-4-phosphate dehydrogenase (339 aa).

Residues 12–13 and R81 each bind NAD(+); that span reads RI. Residues 154-156, R200, 213-214, and R236 each bind substrate; these read SCT and TK. The active-site Nucleophile is the C155. N318 contributes to the NAD(+) binding site.

This sequence belongs to the glyceraldehyde-3-phosphate dehydrogenase family. Epd subfamily. As to quaternary structure, homotetramer.

It localises to the cytoplasm. It catalyses the reaction D-erythrose 4-phosphate + NAD(+) + H2O = 4-phospho-D-erythronate + NADH + 2 H(+). It functions in the pathway cofactor biosynthesis; pyridoxine 5'-phosphate biosynthesis; pyridoxine 5'-phosphate from D-erythrose 4-phosphate: step 1/5. Catalyzes the NAD-dependent conversion of D-erythrose 4-phosphate to 4-phosphoerythronate. This Shigella dysenteriae serotype 1 (strain Sd197) protein is D-erythrose-4-phosphate dehydrogenase.